The primary structure comprises 380 residues: Elongation factor Ts, mitochondrial (380 aa).

Belongs to the EF-Ts family.

The protein resides in the mitochondrion. Functionally, associates with the EF-Tu.GDP complex and induces the exchange of GDP to GTP. It remains bound to the aminoacyl-tRNA.EF-Tu.GTP complex up to the GTP hydrolysis stage on the ribosome. The sequence is that of Elongation factor Ts, mitochondrial from Plasmodium chabaudi chabaudi.